The following is a 516-amino-acid chain: L-amino-acid oxidase (516 aa).

An N-terminal signal peptide occupies residues 1 to 18 (MNVFFMFSLLFLAALGSC). A disulfide bridge connects residues Cys28 and Cys191. FAD contacts are provided by residues 61–62 (MS), 81–82 (EA), Arg89, and 105–108 (GPMR). A substrate-binding site is contributed by Arg108. N-linked (GlcNAc...) asparagine glycosylation is present at Asn190. Residue His241 coordinates substrate. Residue Val279 participates in FAD binding. Residues Cys349 and Cys430 are joined by a disulfide bond. Residue Asn379 is glycosylated (N-linked (GlcNAc...) asparagine). Tyr390 provides a ligand contact to substrate. Residues Glu475, 481–486 (HGWIDS), and 482–487 (GWIDSS) each bind FAD. Substrate contacts are provided by residues 481–482 (HG) and 482–483 (GW).

This sequence belongs to the flavin monoamine oxidase family. FIG1 subfamily. As to quaternary structure, homodimer; non-covalently linked. Requires FAD as cofactor. Post-translationally, N-glycosylated. In terms of tissue distribution, expressed by the venom gland.

It localises to the secreted. The catalysed reaction is an L-alpha-amino acid + O2 + H2O = a 2-oxocarboxylate + H2O2 + NH4(+). Catalyzes an oxidative deamination of predominantly hydrophobic and aromatic L-amino acids, thus producing hydrogen peroxide that may contribute to the diverse toxic effects of this enzyme. Exhibits diverse biological activities, such as hemorrhage, hemolysis, edema, apoptosis of vascular endothelial cells or tumor cell lines, antibacterial and antiparasitic activities, as well as regulation of platelet aggregation. Effects of snake L-amino oxidases on platelets are controversial, since they either induce aggregation or inhibit agonist-induced aggregation. These different effects are probably due to different experimental conditions. Displays dose-dependent inhibition on HIV-1 infection and replication. This chain is L-amino-acid oxidase, found in Trimeresurus stejnegeri (Chinese green tree viper).